Here is a 126-residue protein sequence, read N- to C-terminus: Arginine decarboxylase proenzyme (126 aa).

The active-site Schiff-base intermediate with substrate; via pyruvic acid is the Ser74. At Ser74 the chain carries Pyruvic acid (Ser); by autocatalysis. His79 acts as the Proton acceptor; for processing activity in catalysis. The active-site Proton donor; for catalytic activity is Cys94.

Belongs to the prokaryotic AdoMetDC family. Type 1 subfamily. As to quaternary structure, heterooctamer of four alpha and four beta chains arranged as a tetramer of alpha/beta heterodimers. Pyruvate is required as a cofactor. In terms of processing, is synthesized initially as an inactive proenzyme. Formation of the active enzyme involves a self-maturation process in which the active site pyruvoyl group is generated from an internal serine residue via an autocatalytic post-translational modification. Two non-identical subunits are generated from the proenzyme in this reaction, and the pyruvate is formed at the N-terminus of the alpha chain, which is derived from the carboxyl end of the proenzyme. The post-translation cleavage follows an unusual pathway, termed non-hydrolytic serinolysis, in which the side chain hydroxyl group of the serine supplies its oxygen atom to form the C-terminus of the beta chain, while the remainder of the serine residue undergoes an oxidative deamination to produce ammonia and the pyruvoyl group blocking the N-terminus of the alpha chain.

The enzyme catalyses L-arginine + H(+) = agmatine + CO2. It participates in amine and polyamine biosynthesis; agmatine biosynthesis; agmatine from L-arginine: step 1/1. Functionally, specifically catalyzes the decarboxylation of L-arginine to agmatine. Has no S-adenosylmethionine decarboxylase (AdoMetDC) activity. The protein is Arginine decarboxylase proenzyme of Pyrobaculum aerophilum (strain ATCC 51768 / DSM 7523 / JCM 9630 / CIP 104966 / NBRC 100827 / IM2).